Consider the following 508-residue polypeptide: UDP-N-acetylmuramoylalanine--D-glutamate ligase (508 aa).

Residue 138–144 participates in ATP binding; the sequence is GTNGKTT.

It belongs to the MurCDEF family.

It is found in the cytoplasm. The enzyme catalyses UDP-N-acetyl-alpha-D-muramoyl-L-alanine + D-glutamate + ATP = UDP-N-acetyl-alpha-D-muramoyl-L-alanyl-D-glutamate + ADP + phosphate + H(+). Its pathway is cell wall biogenesis; peptidoglycan biosynthesis. Its function is as follows. Cell wall formation. Catalyzes the addition of glutamate to the nucleotide precursor UDP-N-acetylmuramoyl-L-alanine (UMA). This chain is UDP-N-acetylmuramoylalanine--D-glutamate ligase, found in Bordetella avium (strain 197N).